The chain runs to 302 residues: Aurora/IPL1-related protein kinase 2 (302 aa).

Residues 1-17 are compositionally biased toward polar residues; it reads MENKPQILQTKSKNTPN. Residues 1–23 form a disordered region; sequence MENKPQILQTKSKNTPNKGGKLS. The 251-residue stretch at 27-277 folds into the Protein kinase domain; sequence FEIGRPLGKG…LQEVKDHYWV (251 aa). Residues 33–41 and Lys56 contribute to the ATP site; that span reads LGKGKFGSV. Asp150 serves as the catalytic Proton acceptor.

Belongs to the protein kinase superfamily. Ser/Thr protein kinase family. Interacts with zen-4 and icp-1. Part of a complex containing at least air-2; icp-1; csc-1 and bir-1. Interacts with tlk-1 and bmk-1.

It localises to the cytoplasm. The protein resides in the cytoskeleton. It is found in the chromosome. The protein localises to the midbody. It carries out the reaction L-seryl-[protein] + ATP = O-phospho-L-seryl-[protein] + ADP + H(+). The catalysed reaction is L-threonyl-[protein] + ATP = O-phospho-L-threonyl-[protein] + ADP + H(+). Its function is as follows. Serine/threonine-protein kinase which mediates both meiotic and mitotic chromosome segregation. Required for histone H3 'Ser-10' phosphorylation. Phosphorylates tlk-1 and zen-4. The protein is Aurora/IPL1-related protein kinase 2 (air-2) of Caenorhabditis briggsae.